A 238-amino-acid polypeptide reads, in one-letter code: tRNA (guanine-N(7)-)-methyltransferase (238 aa).

S-adenosyl-L-methionine contacts are provided by Glu-68, Glu-93, Asp-120, and Asp-143. Asp-143 is a catalytic residue. Substrate is bound by residues Lys-147, Asp-179, and Thr-216–Glu-219.

Belongs to the class I-like SAM-binding methyltransferase superfamily. TrmB family.

The enzyme catalyses guanosine(46) in tRNA + S-adenosyl-L-methionine = N(7)-methylguanosine(46) in tRNA + S-adenosyl-L-homocysteine. The protein operates within tRNA modification; N(7)-methylguanine-tRNA biosynthesis. Its function is as follows. Catalyzes the formation of N(7)-methylguanine at position 46 (m7G46) in tRNA. This is tRNA (guanine-N(7)-)-methyltransferase from Aliivibrio salmonicida (strain LFI1238) (Vibrio salmonicida (strain LFI1238)).